Reading from the N-terminus, the 514-residue chain is Probable endopolygalacturonase D (514 aa).

The signal sequence occupies residues 1 to 16 (MKRCALLTPLLPLALA). A disordered region spans residues 134 to 166 (IKSSSPGPSSSFAAAATTEAPTSTRASPYTPYT). Over residues 136–166 (SSSPGPSSSFAAAATTEAPTSTRASPYTPYT) the composition is skewed to low complexity. Cysteine 173 and cysteine 188 are oxidised to a cystine. N-linked (GlcNAc...) asparagine glycosylation occurs at asparagine 240. PbH1 repeat units follow at residues 280-302 (VYNSVVANLNIQNWPVHCFDIEN), 303-341 (TESLTLTGITLDNSAGDEPNDSSDGDPAAHNSDGFDIKS), 342-363 (STDLILKDSNVYNQDDCVAITS), 364-384 (GTNITVDNMYCSGGHGLSIGS), 393-414 (VDGVVFSNSQVVNSQNGCRIKT), 422-444 (VSNIKYENISLSGISKYGIVVQQ), and 456-500 (SNGV…SITG). A disordered region spans residues 312–335 (TLDNSAGDEPNDSSDGDPAAHNSD). Asparagine 322 carries an N-linked (GlcNAc...) asparagine glycan. The Proton donor role is filled by aspartate 356. Cysteine 358 and cysteine 374 form a disulfide bridge. An N-linked (GlcNAc...) asparagine glycan is attached at asparagine 366. Residue histidine 378 is part of the active site. N-linked (GlcNAc...) asparagine glycosylation occurs at asparagine 429. A disulfide bond links cysteine 483 and cysteine 488. The N-linked (GlcNAc...) asparagine glycan is linked to asparagine 490. A disulfide bond links cysteine 506 and cysteine 513.

It belongs to the glycosyl hydrolase 28 family.

It is found in the secreted. The catalysed reaction is (1,4-alpha-D-galacturonosyl)n+m + H2O = (1,4-alpha-D-galacturonosyl)n + (1,4-alpha-D-galacturonosyl)m.. Its function is as follows. Involved in maceration and soft-rotting of plant tissue. Hydrolyzes the 1,4-alpha glycosidic bonds of de-esterified pectate in the smooth region of the plant cell wall. In Emericella nidulans (strain FGSC A4 / ATCC 38163 / CBS 112.46 / NRRL 194 / M139) (Aspergillus nidulans), this protein is Probable endopolygalacturonase D (pgaD).